A 208-amino-acid chain; its full sequence is MSGRFITLEGGEGAGKSSNLVWLAEALRAEGKTVMVSREPGGTALAESIREVLLAPSNEVMADDTELLLVFAARAQHLEQKIRPALARGEWVLCDRFLDATWAYQGAGRGLDSAAIAALEALVIRDTRPDMTILFDVPVEVGMARAGKRAALDRIEQEDRAFFDRIRQCYLARAAQEPNRFRTVDASQPLESVQQQLARIVEEMQAWP.

Position 10 to 17 (G10 to S17) interacts with ATP.

It belongs to the thymidylate kinase family.

It carries out the reaction dTMP + ATP = dTDP + ADP. Phosphorylation of dTMP to form dTDP in both de novo and salvage pathways of dTTP synthesis. This is Thymidylate kinase from Alcanivorax borkumensis (strain ATCC 700651 / DSM 11573 / NCIMB 13689 / SK2).